The primary structure comprises 437 residues: Na(+)/H(+) antiporter NhaA (437 aa).

11 helical membrane-spanning segments follow: residues 12-32 (SMNI…AVIA), 65-85 (LTMI…MVGL), 103-123 (ALPF…YSMV), 133-153 (GLAI…SLLG), 162-182 (IFLT…IAIF), 186-206 (HVAY…YFIG), 214-234 (IFFL…GIHS), 308-328 (GAVN…VMFS), 333-353 (VIGG…FLGI), 377-397 (ISGV…IANL), and 412-432 (LGVL…LHWV).

Belongs to the NhaA Na(+)/H(+) (TC 2.A.33) antiporter family.

The protein localises to the cell inner membrane. It carries out the reaction Na(+)(in) + 2 H(+)(out) = Na(+)(out) + 2 H(+)(in). Na(+)/H(+) antiporter that extrudes sodium in exchange for external protons. The protein is Na(+)/H(+) antiporter NhaA of Bacteroides fragilis (strain YCH46).